The sequence spans 144 residues: UPF0102 protein BURPS668_3819 (144 aa).

Residues 1–28 (MCHAREASLGTGEPEAAPRDNFPREAGS) are disordered. The span at 16 to 28 (AAPRDNFPREAGS) shows a compositional bias: basic and acidic residues.

The protein belongs to the UPF0102 family.

The protein is UPF0102 protein BURPS668_3819 of Burkholderia pseudomallei (strain 668).